The chain runs to 416 residues: Creatine kinase U-type, mitochondrial (416 aa).

A mitochondrion-targeting transit peptide spans 1–39; sequence MAGPFSRLLSARPGLRLLALAGAGSLAAGFLLRPEPIRA. Residues 40-63 are cardiolipin-binding; the sequence is ASERRRQYPPSAEYPDLRKHNNCM. Residues 44–131 enclose the Phosphagen kinase N-terminal domain; sequence RRQYPPSAEY…FDPVIQERHN (88 aa). A Phosphoserine modification is found at Ser151. One can recognise a Phosphagen kinase C-terminal domain in the interval 158 to 400; the sequence is YVLSSRVRTG…NYLIDCERRL (243 aa). Residue 161–165 coordinates ATP; it reads SSRVR. Ser196 carries the post-translational modification Phosphoserine. A Phosphothreonine modification is found at Thr213. Residue His224 coordinates ATP. A Phosphoserine modification is found at Ser232. ATP is bound by residues Arg269, Arg325, and 353 to 358; that span reads RGTGGV. Phosphothreonine is present on Thr355. The residue at position 365 (Ser365) is a Phosphoserine. Residue Asp368 coordinates ATP.

This sequence belongs to the ATP:guanido phosphotransferase family. In terms of assembly, exists as an octamer composed of four MTCK homodimers.

It is found in the mitochondrion inner membrane. The catalysed reaction is creatine + ATP = N-phosphocreatine + ADP + H(+). In terms of biological role, reversibly catalyzes the transfer of phosphate between ATP and various phosphogens (e.g. creatine phosphate). Creatine kinase isoenzymes play a central role in energy transduction in tissues with large, fluctuating energy demands, such as skeletal muscle, heart, brain and spermatozoa. This chain is Creatine kinase U-type, mitochondrial (CKMT1), found in Sus scrofa (Pig).